The sequence spans 1460 residues: DNA-directed RNA polymerase III subunit RPC1 (1460 aa).

Residues cysteine 67, cysteine 70, cysteine 77, histidine 80, cysteine 107, cysteine 110, and cysteine 154 each coordinate Zn(2+). Positions 511, 513, and 515 each coordinate Mg(2+). Positions 858-870 (PPEFLFHAISGRE) are bridging helix.

The protein belongs to the RNA polymerase beta' chain family. In terms of assembly, component of the RNA polymerase III (Pol III) complex consisting of 17 subunits.

It localises to the nucleus. It carries out the reaction RNA(n) + a ribonucleoside 5'-triphosphate = RNA(n+1) + diphosphate. DNA-dependent RNA polymerase catalyzes the transcription of DNA into RNA using the four ribonucleoside triphosphates as substrates. Largest and catalytic core component of RNA polymerase III which synthesizes small RNAs, such as 5S rRNA and tRNAs. Forms the polymerase active center together with the second largest subunit. A single-stranded DNA template strand of the promoter is positioned within the central active site cleft of Pol III. A bridging helix emanates from RPC1 and crosses the cleft near the catalytic site and is thought to promote translocation of Pol III by acting as a ratchet that moves the RNA-DNA hybrid through the active site by switching from straight to bent conformations at each step of nucleotide addition. The protein is DNA-directed RNA polymerase III subunit RPC1 (RPO31) of Saccharomyces cerevisiae (strain ATCC 204508 / S288c) (Baker's yeast).